Consider the following 222-residue polypeptide: V-type ATP synthase subunit D (222 aa).

It belongs to the V-ATPase D subunit family.

Functionally, produces ATP from ADP in the presence of a proton gradient across the membrane. The chain is V-type ATP synthase subunit D from Acetivibrio thermocellus (strain ATCC 27405 / DSM 1237 / JCM 9322 / NBRC 103400 / NCIMB 10682 / NRRL B-4536 / VPI 7372) (Clostridium thermocellum).